A 304-amino-acid polypeptide reads, in one-letter code: Ornithine carbamoyltransferase (304 aa).

Carbamoyl phosphate is bound by residues 47-50, arginine 98, and 125-128; these read STRT and HPCQ. L-ornithine is bound by residues asparagine 156, aspartate 221, and 225-226; that span reads SM. Carbamoyl phosphate-binding positions include 262–263 and arginine 290; that span reads CL.

The protein belongs to the aspartate/ornithine carbamoyltransferase superfamily. OTCase family.

Its subcellular location is the cytoplasm. The catalysed reaction is carbamoyl phosphate + L-ornithine = L-citrulline + phosphate + H(+). It functions in the pathway amino-acid biosynthesis; L-arginine biosynthesis; L-arginine from L-ornithine and carbamoyl phosphate: step 1/3. Functionally, reversibly catalyzes the transfer of the carbamoyl group from carbamoyl phosphate (CP) to the N(epsilon) atom of ornithine (ORN) to produce L-citrulline. The sequence is that of Ornithine carbamoyltransferase from Methanococcus aeolicus (strain ATCC BAA-1280 / DSM 17508 / OCM 812 / Nankai-3).